Consider the following 355-residue polypeptide: Histidinol-phosphate aminotransferase (355 aa).

K218 carries the post-translational modification N6-(pyridoxal phosphate)lysine.

The protein belongs to the class-II pyridoxal-phosphate-dependent aminotransferase family. Histidinol-phosphate aminotransferase subfamily. Homodimer. Pyridoxal 5'-phosphate is required as a cofactor.

It catalyses the reaction L-histidinol phosphate + 2-oxoglutarate = 3-(imidazol-4-yl)-2-oxopropyl phosphate + L-glutamate. The protein operates within amino-acid biosynthesis; L-histidine biosynthesis; L-histidine from 5-phospho-alpha-D-ribose 1-diphosphate: step 7/9. The polypeptide is Histidinol-phosphate aminotransferase (Chlorobaculum parvum (strain DSM 263 / NCIMB 8327) (Chlorobium vibrioforme subsp. thiosulfatophilum)).